Reading from the N-terminus, the 101-residue chain is Small ribosomal subunit protein uS14 (101 aa).

It belongs to the universal ribosomal protein uS14 family. In terms of assembly, part of the 30S ribosomal subunit. Contacts proteins S3 and S10.

In terms of biological role, binds 16S rRNA, required for the assembly of 30S particles and may also be responsible for determining the conformation of the 16S rRNA at the A site. This is Small ribosomal subunit protein uS14 from Serratia proteamaculans (strain 568).